A 335-amino-acid polypeptide reads, in one-letter code: Eukaryotic translation initiation factor 3 subunit H-A (335 aa).

Residues 22–156 (IQVDGLVVLK…LKAYRLTPKL (135 aa)) enclose the MPN domain. Residues 254–272 (QQQKQQYQQRRQQENAQRQ) are compositionally biased toward low complexity. The interval 254-282 (QQQKQQYQQRRQQENAQRQSRGEPPLPEE) is disordered.

This sequence belongs to the eIF-3 subunit H family. Component of the eukaryotic translation initiation factor 3 (eIF-3) complex, which is composed of 13 subunits: eif3a, eif3b, eif3c, eif3d, eif3e, eif3f, eif3g, eif3h, eif3i, eif3j, eif3k, eif3l and eif3m.

It is found in the cytoplasm. Its function is as follows. Component of the eukaryotic translation initiation factor 3 (eIF-3) complex, which is involved in protein synthesis of a specialized repertoire of mRNAs and, together with other initiation factors, stimulates binding of mRNA and methionyl-tRNAi to the 40S ribosome. The eIF-3 complex specifically targets and initiates translation of a subset of mRNAs involved in cell proliferation. This chain is Eukaryotic translation initiation factor 3 subunit H-A (eif3ha), found in Danio rerio (Zebrafish).